A 469-amino-acid chain; its full sequence is Glutamine synthetase (469 aa).

The GS beta-grasp domain maps to 15–96; that stretch reads EDVKFVDVRF…INFFIHDPIT (82 aa). The region spanning 104-469 is the GS catalytic domain; it reads PRNVAKKAEA…PHEFEMYFDV (366 aa). Glu129 and Glu131 together coordinate Mg(2+). Residue Glu205 participates in ATP binding. 2 residues coordinate Mg(2+): Glu210 and Glu218. 221–223 is an ATP binding site; it reads YKF. Residues 262 to 263 and Gly263 each bind L-glutamate; that span reads NG. His267 lines the Mg(2+) pocket. ATP contacts are provided by residues 269–271 and Ser271; that span reads HQS. Arg320, Glu326, and Arg338 together coordinate L-glutamate. Arg338, Arg343, and Lys352 together coordinate ATP. Glu357 is a Mg(2+) binding site. Arg359 is an L-glutamate binding site. Tyr397 is modified (O-AMP-tyrosine).

Belongs to the glutamine synthetase family. In terms of assembly, oligomer of 12 subunits arranged in the form of two hexagons. It depends on Mg(2+) as a cofactor.

It localises to the cytoplasm. It carries out the reaction L-glutamate + NH4(+) + ATP = L-glutamine + ADP + phosphate + H(+). Its activity is regulated as follows. The activity of this enzyme could be controlled by adenylation under conditions of abundant glutamine. Functionally, catalyzes the ATP-dependent biosynthesis of glutamine from glutamate and ammonia. Complements L-glutamine auxotrophy of an E.coli glnA mutant. The sequence is that of Glutamine synthetase from Streptomyces coelicolor (strain ATCC BAA-471 / A3(2) / M145).